We begin with the raw amino-acid sequence, 241 residues long: Pyridoxine 5'-phosphate synthase (241 aa).

3-amino-2-oxopropyl phosphate is bound at residue Asn7. 9 to 10 (DH) lines the 1-deoxy-D-xylulose 5-phosphate pocket. Arg18 is a 3-amino-2-oxopropyl phosphate binding site. His43 functions as the Proton acceptor in the catalytic mechanism. Residues Arg45 and His50 each coordinate 1-deoxy-D-xylulose 5-phosphate. The Proton acceptor role is filled by Glu70. Thr100 contacts 1-deoxy-D-xylulose 5-phosphate. Residue His190 is the Proton donor of the active site. 3-amino-2-oxopropyl phosphate contacts are provided by residues Gly191 and 212-213 (GH).

It belongs to the PNP synthase family. As to quaternary structure, homooctamer; tetramer of dimers.

The protein localises to the cytoplasm. It carries out the reaction 3-amino-2-oxopropyl phosphate + 1-deoxy-D-xylulose 5-phosphate = pyridoxine 5'-phosphate + phosphate + 2 H2O + H(+). It functions in the pathway cofactor biosynthesis; pyridoxine 5'-phosphate biosynthesis; pyridoxine 5'-phosphate from D-erythrose 4-phosphate: step 5/5. Its function is as follows. Catalyzes the complicated ring closure reaction between the two acyclic compounds 1-deoxy-D-xylulose-5-phosphate (DXP) and 3-amino-2-oxopropyl phosphate (1-amino-acetone-3-phosphate or AAP) to form pyridoxine 5'-phosphate (PNP) and inorganic phosphate. This Bordetella avium (strain 197N) protein is Pyridoxine 5'-phosphate synthase.